Reading from the N-terminus, the 180-residue chain is Large ribosomal subunit protein uL5 (180 aa).

The protein belongs to the universal ribosomal protein uL5 family. Part of the 50S ribosomal subunit; part of the 5S rRNA/L5/L18/L25 subcomplex. Contacts the 5S rRNA and the P site tRNA. Forms a bridge to the 30S subunit in the 70S ribosome.

In terms of biological role, this is one of the proteins that bind and probably mediate the attachment of the 5S RNA into the large ribosomal subunit, where it forms part of the central protuberance. In the 70S ribosome it contacts protein S13 of the 30S subunit (bridge B1b), connecting the 2 subunits; this bridge is implicated in subunit movement. Contacts the P site tRNA; the 5S rRNA and some of its associated proteins might help stabilize positioning of ribosome-bound tRNAs. The sequence is that of Large ribosomal subunit protein uL5 from Leuconostoc mesenteroides subsp. mesenteroides (strain ATCC 8293 / DSM 20343 / BCRC 11652 / CCM 1803 / JCM 6124 / NCDO 523 / NBRC 100496 / NCIMB 8023 / NCTC 12954 / NRRL B-1118 / 37Y).